The sequence spans 115 residues: Ribonuclease P protein component (115 aa).

It belongs to the RnpA family. Consists of a catalytic RNA component (M1 or rnpB) and a protein subunit.

It carries out the reaction Endonucleolytic cleavage of RNA, removing 5'-extranucleotides from tRNA precursor.. In terms of biological role, RNaseP catalyzes the removal of the 5'-leader sequence from pre-tRNA to produce the mature 5'-terminus. It can also cleave other RNA substrates such as 4.5S RNA. The protein component plays an auxiliary but essential role in vivo by binding to the 5'-leader sequence and broadening the substrate specificity of the ribozyme. The polypeptide is Ribonuclease P protein component (Bacillus cereus (strain B4264)).